We begin with the raw amino-acid sequence, 473 residues long: Chromosomal replication initiator protein DnaA (473 aa).

A domain I, interacts with DnaA modulators region spans residues Met-1 to Val-87. The tract at residues Val-87–Thr-132 is domain II. The interval Arg-133–Ala-349 is domain III, AAA+ region. Residues Gly-177, Gly-179, Lys-180, and Thr-181 each contribute to the ATP site. The segment at Ser-350 to Arg-473 is domain IV, binds dsDNA.

Belongs to the DnaA family. Oligomerizes as a right-handed, spiral filament on DNA at oriC.

It is found in the cytoplasm. Functionally, plays an essential role in the initiation and regulation of chromosomal replication. ATP-DnaA binds to the origin of replication (oriC) to initiate formation of the DNA replication initiation complex once per cell cycle. Binds the DnaA box (a 9 base pair repeat at the origin) and separates the double-stranded (ds)DNA. Forms a right-handed helical filament on oriC DNA; dsDNA binds to the exterior of the filament while single-stranded (ss)DNA is stabiized in the filament's interior. The ATP-DnaA-oriC complex binds and stabilizes one strand of the AT-rich DNA unwinding element (DUE), permitting loading of DNA polymerase. After initiation quickly degrades to an ADP-DnaA complex that is not apt for DNA replication. Binds acidic phospholipids. This is Chromosomal replication initiator protein DnaA from Leifsonia xyli subsp. xyli (strain CTCB07).